The sequence spans 235 residues: 7-cyano-7-deazaguanine synthase (235 aa).

11–21 (FSGGQDSTTCV) serves as a coordination point for ATP. Residues C199, C214, C217, and C220 each coordinate Zn(2+).

This sequence belongs to the QueC family. Requires Zn(2+) as cofactor.

The enzyme catalyses 7-carboxy-7-deazaguanine + NH4(+) + ATP = 7-cyano-7-deazaguanine + ADP + phosphate + H2O + H(+). It functions in the pathway purine metabolism; 7-cyano-7-deazaguanine biosynthesis. Functionally, catalyzes the ATP-dependent conversion of 7-carboxy-7-deazaguanine (CDG) to 7-cyano-7-deazaguanine (preQ(0)). The sequence is that of 7-cyano-7-deazaguanine synthase from Janthinobacterium sp. (strain Marseille) (Minibacterium massiliensis).